Consider the following 287-residue polypeptide: MTTQKFGQIIDGVALSAKLRADVATRVLALKARGVTPGLAVILVGEDPASAVYVRNKVKACQDTGVRSVFEKYEATLSEADLLARIAALNADPSIHGILVQMPIPKHINPHKVIEAISVTKDVDGYATLSAGELMTGAPGFRPCTPYGCMKLIETTGIDLRGKHAVVIGRSNTVGKPMALLLLQANATVTVCHSATRDIGYHTRQADVIVAAVGKRNVLTADMVKPGAVVIDVGMNRNDEGKLCGDVDFAGVKEVAGFITPVPGGVGPMTITMLLVNTLEAAERTVK.

Residues 169-171 (GRS) and Ser194 contribute to the NADP(+) site.

It belongs to the tetrahydrofolate dehydrogenase/cyclohydrolase family. In terms of assembly, homodimer.

It carries out the reaction (6R)-5,10-methylene-5,6,7,8-tetrahydrofolate + NADP(+) = (6R)-5,10-methenyltetrahydrofolate + NADPH. The catalysed reaction is (6R)-5,10-methenyltetrahydrofolate + H2O = (6R)-10-formyltetrahydrofolate + H(+). The protein operates within one-carbon metabolism; tetrahydrofolate interconversion. Catalyzes the oxidation of 5,10-methylenetetrahydrofolate to 5,10-methenyltetrahydrofolate and then the hydrolysis of 5,10-methenyltetrahydrofolate to 10-formyltetrahydrofolate. The chain is Bifunctional protein FolD from Albidiferax ferrireducens (strain ATCC BAA-621 / DSM 15236 / T118) (Rhodoferax ferrireducens).